The primary structure comprises 86 residues: Exodeoxyribonuclease 7 small subunit (86 aa).

Positions 1–26 (MQDELFETEKAPQKNTKNAKNAPKKS) are disordered.

Belongs to the XseB family. In terms of assembly, heterooligomer composed of large and small subunits.

The protein resides in the cytoplasm. It carries out the reaction Exonucleolytic cleavage in either 5'- to 3'- or 3'- to 5'-direction to yield nucleoside 5'-phosphates.. Bidirectionally degrades single-stranded DNA into large acid-insoluble oligonucleotides, which are then degraded further into small acid-soluble oligonucleotides. The polypeptide is Exodeoxyribonuclease 7 small subunit (Helicobacter pylori (strain HPAG1)).